A 224-amino-acid polypeptide reads, in one-letter code: Oxalate oxidase 2 (224 aa).

An N-terminal signal peptide occupies residues 1–23 (MGYSKTLAVSLFAVLLLAPAVLA). Cysteines 33 and 49 form a disulfide. The Cupin type-1 domain maps to 63-214 (SKLAKAGNTS…ALRVEAGVVE (152 aa)). Residues N70 and N75 are each glycosylated (N-linked (GlcNAc...) asparagine). Mn(2+) contacts are provided by H111, H113, E118, and H160.

The protein belongs to the germin family. Oligomer (believed to be a pentamer but probably hexamer). Post-translationally, glycosylated. A form called G contains antennary GlcNAc residues, whereas a form called G' lacks antennary GlcNAc residues in its otherwise identical glycans. As to expression, root.

The protein localises to the secreted. The protein resides in the extracellular space. Its subcellular location is the apoplast. It localises to the cell wall. The enzyme catalyses oxalate + O2 + 2 H(+) = H2O2 + 2 CO2. Functionally, releases hydrogen peroxide in the apoplast. May play an important role in several aspects of plant growth and defense mechanisms. The chain is Oxalate oxidase 2 from Hordeum vulgare (Barley).